The primary structure comprises 464 residues: MGAKTYEGGDHHEDATNVLSTKSNAVGGKPRGANMLEDGDGEFGSDDDDDGGDGQDSSLAMVNPDDAAKPKKKKRSKKKKNNKKKSGAGAQRQTSPPRVPLSQLFPDGKYPIGQMVEVQDENLRRTTDEEFRYLSRGTITDDEALNDYRKAAEVHRQVRRWIHETIQPGSSLTELAVGIEDGVRALLEHQGLEPGDSLKGGMGFPTGLALNNCAAHYTPNPGQKDIILKTDDVLKIDFGVHVNGWIVDSAFTVTFDPVYDNLVAAVKDATNTGLKCAGVDARVGEIGGFIQEAMESYEVEINGKVYPVKSIRSITGHDILRYRVHGGKQVPFVKSNDQTKMEEGEVFAIETFGSTGKGYLRDGPGVYGYSKEPHAGNVHLPLASARALLKTINQNFGTIPFCRRYLDRLGIEKYLLGMNSLISHGIVQMYPPLVDIAGSYTAQFEHTILINSSGNEIISRGDDY.

A disordered region spans residues 1-106 (MGAKTYEGGD…PRVPLSQLFP (106 aa)). A compositionally biased stretch (acidic residues) spans 37–53 (EDGDGEFGSDDDDDGGD). The segment covering 70 to 86 (PKKKKRSKKKKNNKKKS) has biased composition (basic residues). His-216 provides a ligand contact to substrate. 3 residues coordinate a divalent metal cation: Asp-237, Asp-248, and His-317. His-325 contacts substrate. Residues Glu-350 and Glu-445 each contribute to the a divalent metal cation site.

This sequence belongs to the peptidase M24A family. Methionine aminopeptidase eukaryotic type 2 subfamily. Co(2+) serves as cofactor. Zn(2+) is required as a cofactor. It depends on Mn(2+) as a cofactor. Requires Fe(2+) as cofactor.

It is found in the cytoplasm. It carries out the reaction Release of N-terminal amino acids, preferentially methionine, from peptides and arylamides.. Cotranslationally removes the N-terminal methionine from nascent proteins. The N-terminal methionine is often cleaved when the second residue in the primary sequence is small and uncharged (Met-Ala-, Cys, Gly, Pro, Ser, Thr, or Val). The sequence is that of Methionine aminopeptidase 2-2 from Talaromyces stipitatus (strain ATCC 10500 / CBS 375.48 / QM 6759 / NRRL 1006) (Penicillium stipitatum).